We begin with the raw amino-acid sequence, 403 residues long: tRNA(Met) cytidine acetate ligase (403 aa).

Residues 7 to 20 (VVEYNPFHNGHAYH), Gly-101, Asn-164, and 189 to 190 (RI) contribute to the ATP site.

Belongs to the TmcAL family.

Its subcellular location is the cytoplasm. It carries out the reaction cytidine(34) in elongator tRNA(Met) + acetate + ATP = N(4)-acetylcytidine(34) in elongator tRNA(Met) + AMP + diphosphate. Functionally, catalyzes the formation of N(4)-acetylcytidine (ac(4)C) at the wobble position of elongator tRNA(Met), using acetate and ATP as substrates. First activates an acetate ion to form acetyladenylate (Ac-AMP) and then transfers the acetyl group to tRNA to form ac(4)C34. The sequence is that of tRNA(Met) cytidine acetate ligase from Lysinibacillus sphaericus (strain C3-41).